The primary structure comprises 209 residues: Imidazole glycerol phosphate synthase subunit HisH (209 aa).

The region spanning 5-209 (AIAIIDYDMG…LRNFVALVKD (205 aa)) is the Glutamine amidotransferase type-1 domain. Cys-83 serves as the catalytic Nucleophile. Residues His-188 and Glu-190 contribute to the active site.

In terms of assembly, heterodimer of HisH and HisF.

It is found in the cytoplasm. The catalysed reaction is 5-[(5-phospho-1-deoxy-D-ribulos-1-ylimino)methylamino]-1-(5-phospho-beta-D-ribosyl)imidazole-4-carboxamide + L-glutamine = D-erythro-1-(imidazol-4-yl)glycerol 3-phosphate + 5-amino-1-(5-phospho-beta-D-ribosyl)imidazole-4-carboxamide + L-glutamate + H(+). The enzyme catalyses L-glutamine + H2O = L-glutamate + NH4(+). Its pathway is amino-acid biosynthesis; L-histidine biosynthesis; L-histidine from 5-phospho-alpha-D-ribose 1-diphosphate: step 5/9. IGPS catalyzes the conversion of PRFAR and glutamine to IGP, AICAR and glutamate. The HisH subunit catalyzes the hydrolysis of glutamine to glutamate and ammonia as part of the synthesis of IGP and AICAR. The resulting ammonia molecule is channeled to the active site of HisF. The chain is Imidazole glycerol phosphate synthase subunit HisH from Thermosynechococcus vestitus (strain NIES-2133 / IAM M-273 / BP-1).